Here is a 498-residue protein sequence, read N- to C-terminus: Acetyl-coenzyme A carboxylase carboxyl transferase subunit beta, chloroplastic (498 aa).

The tract at residues 36-59 is disordered; sequence SVNEDPIINDMDKDIPSGSDSDNS. Residues 231 to 498 form the CoA carboxyltransferase N-terminal domain; it reads LWVQCENCYG…FFPLNQNSIK (268 aa). Zn(2+) contacts are provided by cysteine 235, cysteine 238, cysteine 254, and cysteine 257. The C4-type zinc finger occupies 235–257; sequence CENCYGLNYKRFLKSKMNICEHC.

Belongs to the AccD/PCCB family. Acetyl-CoA carboxylase is a heterohexamer composed of biotin carboxyl carrier protein, biotin carboxylase and 2 subunits each of ACCase subunit alpha and ACCase plastid-coded subunit beta (accD). It depends on Zn(2+) as a cofactor.

It localises to the plastid. The protein resides in the chloroplast stroma. It catalyses the reaction N(6)-carboxybiotinyl-L-lysyl-[protein] + acetyl-CoA = N(6)-biotinyl-L-lysyl-[protein] + malonyl-CoA. It functions in the pathway lipid metabolism; malonyl-CoA biosynthesis; malonyl-CoA from acetyl-CoA: step 1/1. Component of the acetyl coenzyme A carboxylase (ACC) complex. Biotin carboxylase (BC) catalyzes the carboxylation of biotin on its carrier protein (BCCP) and then the CO(2) group is transferred by the transcarboxylase to acetyl-CoA to form malonyl-CoA. The polypeptide is Acetyl-coenzyme A carboxylase carboxyl transferase subunit beta, chloroplastic (Morus indica (Mulberry)).